Reading from the N-terminus, the 171-residue chain is 3-hydroxydecanoyl-[acyl-carrier-protein] dehydratase (171 aa).

His70 is an active-site residue.

The protein belongs to the thioester dehydratase family. FabA subfamily. As to quaternary structure, homodimer.

It localises to the cytoplasm. The enzyme catalyses a (3R)-hydroxyacyl-[ACP] = a (2E)-enoyl-[ACP] + H2O. The catalysed reaction is (3R)-hydroxydecanoyl-[ACP] = (2E)-decenoyl-[ACP] + H2O. It carries out the reaction (2E)-decenoyl-[ACP] = (3Z)-decenoyl-[ACP]. It participates in lipid metabolism; fatty acid biosynthesis. Its function is as follows. Necessary for the introduction of cis unsaturation into fatty acids. Catalyzes the dehydration of (3R)-3-hydroxydecanoyl-ACP to E-(2)-decenoyl-ACP and then its isomerization to Z-(3)-decenoyl-ACP. Can catalyze the dehydratase reaction for beta-hydroxyacyl-ACPs with saturated chain lengths up to 16:0, being most active on intermediate chain length. The sequence is that of 3-hydroxydecanoyl-[acyl-carrier-protein] dehydratase from Xanthomonas euvesicatoria pv. vesicatoria (strain 85-10) (Xanthomonas campestris pv. vesicatoria).